A 391-amino-acid polypeptide reads, in one-letter code: Pyridinium-3,5-bisthiocarboxylic acid mononucleotide nickel insertion protein (391 aa).

Belongs to the LarC family.

It catalyses the reaction Ni(II)-pyridinium-3,5-bisthiocarboxylate mononucleotide = pyridinium-3,5-bisthiocarboxylate mononucleotide + Ni(2+). In terms of biological role, involved in the biosynthesis of a nickel-pincer cofactor ((SCS)Ni(II) pincer complex). Binds Ni(2+), and functions in nickel delivery to pyridinium-3,5-bisthiocarboxylic acid mononucleotide (P2TMN), to form the mature cofactor. Is thus probably required for the activation of nickel-pincer cofactor-dependent enzymes. The protein is Pyridinium-3,5-bisthiocarboxylic acid mononucleotide nickel insertion protein of Staphylococcus saprophyticus subsp. saprophyticus (strain ATCC 15305 / DSM 20229 / NCIMB 8711 / NCTC 7292 / S-41).